Here is a 449-residue protein sequence, read N- to C-terminus: Transcription factor AP-2 gamma (449 aa).

A Glycyl lysine isopeptide (Lys-Gly) (interchain with G-Cter in SUMO) cross-link involves residue K10. A disordered region spans residues 13–58 (EDCEDRHDSSSNGNPRIPHLSSPGQHLYSPAPPLSHTGVAEYQPPP). The PPxY motif signature appears at 59 to 64 (YFPPPY). A disordered region spans residues 94 to 130 (AATGSQQQAWPGRQSQEGSSLASHHSRSASLIPHISG). The segment covering 95-111 (ATGSQQQAWPGRQSQEG) has biased composition (polar residues). Over residues 112 to 124 (SSLASHHSRSASL) the composition is skewed to low complexity. S251 bears the Phosphoserine; by PKA mark. The tract at residues 292-423 (RRKAAHVTLL…YIKEALIAID (132 aa)) is H-S-H (helix-span-helix), dimerization. The disordered stretch occupies residues 426 to 449 (YMNPGDQSPADSSKTMEKMEKHRK). S433 bears the Phosphoserine mark. A compositionally biased stretch (basic and acidic residues) spans 439 to 449 (KTMEKMEKHRK).

The protein belongs to the AP-2 family. Binds DNA as a dimer. Can form homodimers or heterodimers with other AP-2 family members. Interacts with WWOX. Interacts with UBE2I. Interacts with KCTD1; this interaction represses transcription activation. Interacts with CITED2 (via C-terminus); the interaction stimulates TFAP2B-transcriptional activity. Interacts with CITED4. Interacts with MTA1. Sumoylated on Lys-10; which inhibits transcriptional activity. Expressed in lung, ovary and testis. Expressed in most squamous epithelia. Also, detected in several exocrine glands including the prostate, the preputial and salivary glands, serous glands of the tongue and ocular harderian glands.

It is found in the nucleus. Sequence-specific DNA-binding transcription factor that interacts with cellular enhancer elements to regulate transcription of selected genes, and which plays a key role in early embryonic development. AP-2 factors bind to the consensus sequence 5'-GCCNNNGGC-3' and activate genes involved in a large spectrum of important biological functions. TFAP2C plays a key role in early embryonic development by regulating both inner cell mass (ICM) and trophectoderm differentiation. At the 8-cell stage, during morula development, controls expression of cell-polarity genes. Upon trophoblast commitment, binds to late trophectoderm genes in blastocysts together with CDX2, and later to extra-embryonic ectoderm genes together with SOX2. Binds to both closed and open chromatin with other transcription factors. The chain is Transcription factor AP-2 gamma from Mus musculus (Mouse).